We begin with the raw amino-acid sequence, 57 residues long: Large ribosomal subunit protein bL32A (57 aa).

This sequence belongs to the bacterial ribosomal protein bL32 family.

In Streptomyces coelicolor (strain ATCC BAA-471 / A3(2) / M145), this protein is Large ribosomal subunit protein bL32A (rpmF1).